Reading from the N-terminus, the 93-residue chain is DNA-directed RNA polymerase subunit omega (93 aa).

It belongs to the RNA polymerase subunit omega family. The RNAP catalytic core consists of 2 alpha, 1 beta, 1 beta' and 1 omega subunit. When a sigma factor is associated with the core the holoenzyme is formed, which can initiate transcription.

It carries out the reaction RNA(n) + a ribonucleoside 5'-triphosphate = RNA(n+1) + diphosphate. In terms of biological role, promotes RNA polymerase assembly. Latches the N- and C-terminal regions of the beta' subunit thereby facilitating its interaction with the beta and alpha subunits. This Actinobacillus pleuropneumoniae serotype 3 (strain JL03) protein is DNA-directed RNA polymerase subunit omega.